The chain runs to 314 residues: Tyrosine recombinase XerC (314 aa).

A Core-binding (CB) domain is found at 1–85; that stretch reads MNEQVEAFLR…AVKSFFTFLT (85 aa). The region spanning 106–291 is the Tyr recombinase domain; sequence DLPRALTPRQ…NHESSHTPHA (186 aa). Residues Arg-147, Lys-171, His-243, Arg-246, and His-269 contribute to the active site. The O-(3'-phospho-DNA)-tyrosine intermediate role is filled by Tyr-278. The segment at 284 to 314 is disordered; the sequence is ESSHTPHAHPAPRASEVNGVRDEQALVPEEK. Residues 302–314 are compositionally biased toward basic and acidic residues; it reads GVRDEQALVPEEK.

This sequence belongs to the 'phage' integrase family. XerC subfamily. As to quaternary structure, forms a cyclic heterotetrameric complex composed of two molecules of XerC and two molecules of XerD.

Its subcellular location is the cytoplasm. Functionally, site-specific tyrosine recombinase, which acts by catalyzing the cutting and rejoining of the recombining DNA molecules. The XerC-XerD complex is essential to convert dimers of the bacterial chromosome into monomers to permit their segregation at cell division. It also contributes to the segregational stability of plasmids. The sequence is that of Tyrosine recombinase XerC from Roseiflexus castenholzii (strain DSM 13941 / HLO8).